A 332-amino-acid chain; its full sequence is MQKNILVLGAGAWGTALALQLAYRGHNVRINSWKAEHNEQMLEDNNNHKYLPSIEKFPSRLKAIQDWQANIIEFDSILVATPSSGFKNTVLELKECILPQQNIISATKGFCHDSYALLSEIAEDILPTTKFALLTGPSFAKELANQLPTAVVVASKDINYARYVQELFSNENFRCYTTTDIIGAQVGGAVKNVLAITAGIAAGMEFGVNAHAALITRGLAEIKKLGLKLGANSETFIGLSCLGDLLLTCSDNQSRNRRFGLYLGQGMTIQQALKEVNNVVEGYFTAKAVYNLAKKHNVEMPLVFATYRILYEAADPRDIVKELMTRQLKNEN.

NADPH is bound by residues Trp13, Lys34, and Lys108. Lys108, Gly136, and Ser138 together coordinate sn-glycerol 3-phosphate. NADPH is bound at residue Ala140. 5 residues coordinate sn-glycerol 3-phosphate: Lys191, Asp244, Ser254, Arg255, and Asn256. Lys191 (proton acceptor) is an active-site residue. Arg255 contacts NADPH. Positions 279 and 281 each coordinate NADPH.

It belongs to the NAD-dependent glycerol-3-phosphate dehydrogenase family.

It is found in the cytoplasm. It carries out the reaction sn-glycerol 3-phosphate + NAD(+) = dihydroxyacetone phosphate + NADH + H(+). The enzyme catalyses sn-glycerol 3-phosphate + NADP(+) = dihydroxyacetone phosphate + NADPH + H(+). It participates in membrane lipid metabolism; glycerophospholipid metabolism. Functionally, catalyzes the reduction of the glycolytic intermediate dihydroxyacetone phosphate (DHAP) to sn-glycerol 3-phosphate (G3P), the key precursor for phospholipid synthesis. This is Glycerol-3-phosphate dehydrogenase [NAD(P)+] from Francisella tularensis subsp. mediasiatica (strain FSC147).